We begin with the raw amino-acid sequence, 181 residues long: MSKTSLHATTIYAVRHNGEAAMAGDGQVTLGEQVIMKQTARKVRRLYEGKVLAGFAGSVADAFTLFEKFETKLQQFSGNLERAAVELAQEWRGDKQLRQLEAMLIVMDKDAILVVSGTGEVIAPDDDLIAIGSGGNYALSAGRALKRHASQLSAKEMAYESLKVASDICVFTNDNIIVETL.

Threonine 9 is an active-site residue. Serine 166, cysteine 169, and threonine 172 together coordinate Na(+).

This sequence belongs to the peptidase T1B family. HslV subfamily. A double ring-shaped homohexamer of HslV is capped on each side by a ring-shaped HslU homohexamer. The assembly of the HslU/HslV complex is dependent on binding of ATP.

The protein localises to the cytoplasm. It carries out the reaction ATP-dependent cleavage of peptide bonds with broad specificity.. Allosterically activated by HslU binding. Protease subunit of a proteasome-like degradation complex believed to be a general protein degrading machinery. In Staphylococcus haemolyticus (strain JCSC1435), this protein is ATP-dependent protease subunit HslV.